Reading from the N-terminus, the 476-residue chain is Sulfate adenylyltransferase subunit 1 (476 aa).

Residues Lys-25 to Val-241 enclose the tr-type G domain. Positions Gly-34–Ser-41 are G1. Gly-34–Ser-41 serves as a coordination point for GTP. Residues Gly-92–Asp-96 are G2. The tract at residues Asp-113–Gly-116 is G3. GTP is bound by residues Asp-113–His-117 and Asn-168–Asp-171. Residues Asn-168 to Asp-171 form a G4 region. A G5 region spans residues Ser-206–Leu-208.

Belongs to the TRAFAC class translation factor GTPase superfamily. Classic translation factor GTPase family. CysN/NodQ subfamily. Heterodimer composed of CysD, the smaller subunit, and CysN.

The enzyme catalyses sulfate + ATP + H(+) = adenosine 5'-phosphosulfate + diphosphate. It participates in sulfur metabolism; hydrogen sulfide biosynthesis; sulfite from sulfate: step 1/3. In terms of biological role, with CysD forms the ATP sulfurylase (ATPS) that catalyzes the adenylation of sulfate producing adenosine 5'-phosphosulfate (APS) and diphosphate, the first enzymatic step in sulfur assimilation pathway. APS synthesis involves the formation of a high-energy phosphoric-sulfuric acid anhydride bond driven by GTP hydrolysis by CysN coupled to ATP hydrolysis by CysD. The polypeptide is Sulfate adenylyltransferase subunit 1 (Erwinia tasmaniensis (strain DSM 17950 / CFBP 7177 / CIP 109463 / NCPPB 4357 / Et1/99)).